The following is an 80-amino-acid chain: Large ribosomal subunit protein eL20 (80 aa).

It belongs to the eukaryotic ribosomal protein eL20 family. Part of the 50S ribosomal subunit. Binds 23S rRNA.

The protein is Large ribosomal subunit protein eL20 of Methanopyrus kandleri (strain AV19 / DSM 6324 / JCM 9639 / NBRC 100938).